The following is a 1166-amino-acid chain: ATP-dependent helicase/deoxyribonuclease subunit B (1166 aa).

One can recognise a UvrD-like helicase ATP-binding domain in the interval 1-278 (MGAEFLVGRS…LNLDITYKEL (278 aa)). Residues Ser-10, Gly-11, Lys-14, Thr-15, Lys-16, Thr-236, and Arg-283 each contribute to the ATP site. In terms of domain architecture, UvrD-like helicase C-terminal spans 281–586 (TERHTKTPEL…TFSLIPPALD (306 aa)). Residues Cys-801, Cys-1121, Cys-1124, and Cys-1130 each contribute to the [4Fe-4S] cluster site.

This sequence belongs to the helicase family. AddB/RexB type 1 subfamily. Heterodimer of AddA and AddB. At low magnesium concentrations there is no nuclease activity, but helicase activity is unaffected. serves as cofactor. Mg(2+) is required as a cofactor. The cofactor is [4Fe-4S] cluster.

Its function is as follows. The heterodimer acts both as a highly processive, ATP-dependent DNA helicase and as an ATP-dependent single-stranded exonuclease, acting in both directions. Recognizes the B.subtilis Chi site (5'-AGCGG-3') which transforms the enzyme from a helicase which degrades both DNA strands to one with only 5' to 3' exonuclease activity. This generates a double-stranded DNA with a protruding 3'-terminated single-stranded tail suitable for the initiation of homologous recombination (Chi fragment). The AddB nuclease domain is not required for Chi fragment generation but for recognition of the Chi site; this subunit has 5' -&gt; 3' nuclease activity but no helicase activity. The helicase activity of isolated AddA acts on 3'-tailed substrate and requires AddB to bind to blunt-ended DNA. RecA thread formation during DNA double-strand break repair requires RecJ or AddAB. This chain is ATP-dependent helicase/deoxyribonuclease subunit B, found in Bacillus subtilis (strain 168).